A 734-amino-acid chain; its full sequence is Phosphoribosylformylglycinamidine synthase subunit PurL (734 aa).

Residue H49 is part of the active site. Residues Y52 and K91 each coordinate ATP. E93 provides a ligand contact to Mg(2+). Residues 94-97 (SHNH) and R116 each bind substrate. Residue H95 is the Proton acceptor of the active site. Mg(2+) is bound at residue D117. Q240 lines the substrate pocket. A Mg(2+)-binding site is contributed by D268. 312 to 314 (ESQ) provides a ligand contact to substrate. Positions 491 and 528 each coordinate ATP. N529 contacts Mg(2+). S531 contacts substrate.

Belongs to the FGAMS family. In terms of assembly, monomer. Part of the FGAM synthase complex composed of 1 PurL, 1 PurQ and 2 PurS subunits.

It localises to the cytoplasm. It carries out the reaction N(2)-formyl-N(1)-(5-phospho-beta-D-ribosyl)glycinamide + L-glutamine + ATP + H2O = 2-formamido-N(1)-(5-O-phospho-beta-D-ribosyl)acetamidine + L-glutamate + ADP + phosphate + H(+). Its pathway is purine metabolism; IMP biosynthesis via de novo pathway; 5-amino-1-(5-phospho-D-ribosyl)imidazole from N(2)-formyl-N(1)-(5-phospho-D-ribosyl)glycinamide: step 1/2. Its function is as follows. Part of the phosphoribosylformylglycinamidine synthase complex involved in the purines biosynthetic pathway. Catalyzes the ATP-dependent conversion of formylglycinamide ribonucleotide (FGAR) and glutamine to yield formylglycinamidine ribonucleotide (FGAM) and glutamate. The FGAM synthase complex is composed of three subunits. PurQ produces an ammonia molecule by converting glutamine to glutamate. PurL transfers the ammonia molecule to FGAR to form FGAM in an ATP-dependent manner. PurS interacts with PurQ and PurL and is thought to assist in the transfer of the ammonia molecule from PurQ to PurL. The chain is Phosphoribosylformylglycinamidine synthase subunit PurL from Zymomonas mobilis subsp. mobilis (strain ATCC 31821 / ZM4 / CP4).